Here is a 902-residue protein sequence, read N- to C-terminus: U3 small nucleolar RNA-associated protein 21 homolog (902 aa).

14 WD repeats span residues 40–71 (DIEA…LLFV), 80–110 (TCLK…WDID), 119–154 (THLD…LHTT), 164–198 (TSLL…RVHE), 206–243 (GITS…MEFK), 249–284 (LSCS…QNVT), 289–332 (FGSL…RSRN), 339–373 (SFVK…QSTE), 399–438 (TALS…GQHV), 447–481 (VRSV…KRKS), 492–528 (VTAV…DSLD), 533–568 (ITHA…VREL), 570–611 (GHSN…DSIS), and 613–651 (PSVC…KHVS).

In terms of assembly, interacts with snoRNA U3. Interacts with MPP10. Component of the ribosomal small subunit (SSU) processome composed of at least 40 protein subunits and snoRNA U3.

It is found in the nucleus. The protein localises to the nucleolus. Functionally, involved in nucleolar processing of pre-18S ribosomal RNA and ribosome assembly. This chain is U3 small nucleolar RNA-associated protein 21 homolog, found in Schizosaccharomyces pombe (strain 972 / ATCC 24843) (Fission yeast).